The following is a 247-amino-acid chain: Adenosylcobinamide-GDP ribazoletransferase (247 aa).

6 helical membrane-spanning segments follow: residues 34–54 (IVMFPFIGLILGGVSGLIFIL), 59–79 (CGIPLAALFCILALALLTGGF), 113–133 (GGLALIFVLLAKILVVSELAL), 138–158 (MLAALAAACAAGRGSAVLLMY), 171–193 (VFIGKVSGRQTCITLGLAIIIAT), and 197–219 (PGMQGLAAMVVTCAAIFILGQLL).

Belongs to the CobS family. Requires Mg(2+) as cofactor.

The protein localises to the cell inner membrane. The catalysed reaction is alpha-ribazole + adenosylcob(III)inamide-GDP = adenosylcob(III)alamin + GMP + H(+). The enzyme catalyses alpha-ribazole 5'-phosphate + adenosylcob(III)inamide-GDP = adenosylcob(III)alamin 5'-phosphate + GMP + H(+). It participates in cofactor biosynthesis; adenosylcobalamin biosynthesis; adenosylcobalamin from cob(II)yrinate a,c-diamide: step 7/7. Functionally, joins adenosylcobinamide-GDP and alpha-ribazole to generate adenosylcobalamin (Ado-cobalamin). Also synthesizes adenosylcobalamin 5'-phosphate from adenosylcobinamide-GDP and alpha-ribazole 5'-phosphate. The polypeptide is Adenosylcobinamide-GDP ribazoletransferase (Salmonella newport (strain SL254)).